Reading from the N-terminus, the 510-residue chain is 2,3-bisphosphoglycerate-independent phosphoglycerate mutase (510 aa).

The Mn(2+) site is built by aspartate 13 and serine 63. Serine 63 functions as the Phosphoserine intermediate in the catalytic mechanism. Substrate contacts are provided by residues histidine 124, 154 to 155 (RD), arginine 186, arginine 192, 262 to 265 (RADR), and lysine 334. Mn(2+) contacts are provided by aspartate 401, histidine 405, aspartate 442, histidine 443, and histidine 461.

The protein belongs to the BPG-independent phosphoglycerate mutase family. In terms of assembly, monomer. It depends on Mn(2+) as a cofactor.

The catalysed reaction is (2R)-2-phosphoglycerate = (2R)-3-phosphoglycerate. It participates in carbohydrate degradation; glycolysis; pyruvate from D-glyceraldehyde 3-phosphate: step 3/5. Catalyzes the interconversion of 2-phosphoglycerate and 3-phosphoglycerate. The protein is 2,3-bisphosphoglycerate-independent phosphoglycerate mutase of Vibrio atlanticus (strain LGP32) (Vibrio splendidus (strain Mel32)).